A 156-amino-acid polypeptide reads, in one-letter code: Cell division protein SepF (156 aa).

Residues 23-36 show a composition bias toward basic and acidic residues; the sequence is SYEKEQTDMKKQQD. The tract at residues 23 to 50 is disordered; it reads SYEKEQTDMKKQQDPPEQQDVTFPKAQP.

Belongs to the SepF family. In terms of assembly, homodimer. Interacts with FtsZ.

Its subcellular location is the cytoplasm. Functionally, cell division protein that is part of the divisome complex and is recruited early to the Z-ring. Probably stimulates Z-ring formation, perhaps through the cross-linking of FtsZ protofilaments. Its function overlaps with FtsA. This chain is Cell division protein SepF, found in Bacillus thuringiensis (strain Al Hakam).